The primary structure comprises 401 residues: MPKSWPIVISSHSFCFLPNSEQERKMKDLNFHAATLSEEESLRELKAFDETKAGVKGIVDTGITKIPRIFIDQPKNLDRISVCRGKSDIKIPVINLNGLSSNSEIRREIVEKIGEASEKYGFFQIVNHGIPQDVMDKMVDGVRKFHEQDDQIKRQYYSRDRFNKNFLYSSNYVLIPGIACNWRDTMECIMNSNQPDPQEFPDVCRDILMKYSNYVRNLGLILFELLSEALGLKPNHLEEMDCAEGLILLGHYYPACPQPELTFGTSKHSDSGFLTILMQDQIGGLQILLENQWIDVPFIPGALVINIADLLQLITNDKFKSVEHRVLANKVGPRISVAVAFGIKTQTQEGVSPRLYGPIKELISEENPPIYKEVTVKDFITIRFAKRFDDSSSLSPFRLNN.

One can recognise a Fe2OG dioxygenase domain in the interval 242 to 345; that stretch reads CAEGLILLGH…SVAVAFGIKT (104 aa). Positions 268, 270, and 324 each coordinate Fe cation. Residue R334 participates in 2-oxoglutarate binding.

The protein belongs to the iron/ascorbate-dependent oxidoreductase family. As to quaternary structure, monomer. Requires Fe cation as cofactor. L-ascorbate serves as cofactor. As to expression, highest levels in leaves, lower levels in stems and fruits. Not expressed in flowers and roots.

The protein localises to the cytoplasm. It is found in the nucleus. It carries out the reaction deacetoxyvindoline + 2-oxoglutarate + O2 = 4-O-deacetylvindoline + succinate + CO2. It participates in alkaloid biosynthesis; vindoline biosynthesis. Its function is as follows. Catalyzes the C4-hydroxylation of desacetoxyvindoline. This is Deacetoxyvindoline 4-hydroxylase from Catharanthus roseus (Madagascar periwinkle).